The sequence spans 265 residues: Non-seed lectin (265 aa).

Positions 1-21 (MALYRTKELVSLVSIMFVLLA) form a signal peptide, or 23. N-linked (GlcNAc...) asparagine glycans are attached at residues Asn59 and Asn127.

Belongs to the leguminous lectin family. As to quaternary structure, monomer. Most highly expressed in the epidermal layer of developing shoot tips.

The chain is Non-seed lectin from Pisum sativum (Garden pea).